The chain runs to 274 residues: Short-chain dehydrogenase/reductase bsc3 (274 aa).

Residues I14, Y170, K174, I203, and T205 each contribute to the NADP(+) site. Y170 acts as the Proton donor in catalysis. K174 functions as the Lowers pKa of active site Tyr in the catalytic mechanism.

It belongs to the short-chain dehydrogenases/reductases (SDR) family.

It functions in the pathway mycotoxin biosynthesis. Functionally, short-chain dehydrogenase/reductase; part of the gene cluster that mediates the biosynthesis of the diterpene glucoside brassicicene C. In the first step of the brassicicene C biosynthesis, the bifunctional diterpene synthase bsc8 that possesses both prenyl transferase and terpene cyclase activity, converts isopentenyl diphosphate and dimethylallyl diphosphate into geranylgeranyl diphosphate (GGDP) that is further converted into fusicocca-2,10(14)-diene, the first precursor for brassicicene C. Fusicocca-2,10(14)-diene is then substrate of cytochrome P450 monooxygenase bsc1 for hydroxylation at the C-8 position. Oxidation at C-16 position to aldehyde is then catalyzed by the cytochrome P450 monooyxygenase bsc7, yielding fusicocca-2,10(14)-diene-8-beta,16-diol. Follows the isomerization of the double bond and reduction of aldehyde to alcohol catalyzed by the short-chain dehydrogenase/reductase bsc3 to yield the diol compound fusicocca-1,10(14)-diene-8 beta,16-diol. The next step is the oxidation at the C-3 position of fusicocca-2,10(14)-diene-8-beta,16-diol catalyzed by the alpha-ketoglutarate dependent dioxygenase bsc9, to produce a triol compound. Methylation of the hydroxy group at position 16 is performed by the methyltransferase bsc6. 16-O-methylation is followed by oxidation at the C-13 position to ketone and an alkyl shift of the methyl group leads to brassicicene C. Although the probable acetyltransferase bsc4 is included in the gene cluster, no acetylation reactions are necessary for brassicicene C biosynthesis. However, the fact that brassicicene E, which is a structurally related compound having an acetoxy group at position 12, was previously isolated from another strain of A.brassicicola suggests that the ATCC 96836 strain might also produce a small amount of brassicicene E. This Alternaria brassicicola (Dark leaf spot agent) protein is Short-chain dehydrogenase/reductase bsc3.